The chain runs to 177 residues: tRNA (cytidine(56)-2'-O)-methyltransferase (177 aa).

S-adenosyl-L-methionine is bound by residues Leu84 and 109–113 (GAEKV).

This sequence belongs to the aTrm56 family. In terms of assembly, homodimer.

The protein localises to the cytoplasm. The enzyme catalyses cytidine(56) in tRNA + S-adenosyl-L-methionine = 2'-O-methylcytidine(56) in tRNA + S-adenosyl-L-homocysteine + H(+). In terms of biological role, specifically catalyzes the AdoMet-dependent 2'-O-ribose methylation of cytidine at position 56 in tRNAs. The chain is tRNA (cytidine(56)-2'-O)-methyltransferase from Methanosarcina acetivorans (strain ATCC 35395 / DSM 2834 / JCM 12185 / C2A).